The primary structure comprises 444 residues: ATP-dependent protease ATPase subunit HslU (444 aa).

Residues Ile-20 and 62–67 contribute to the ATP site; that span reads GVGKTE. Residues 130–158 form a disordered region; the sequence is EDRILDALVPPPRGASGEPERGEDNSARQ. Residues Asp-257, Glu-322, and Arg-394 each coordinate ATP.

The protein belongs to the ClpX chaperone family. HslU subfamily. A double ring-shaped homohexamer of HslV is capped on each side by a ring-shaped HslU homohexamer. The assembly of the HslU/HslV complex is dependent on binding of ATP.

The protein resides in the cytoplasm. ATPase subunit of a proteasome-like degradation complex; this subunit has chaperone activity. The binding of ATP and its subsequent hydrolysis by HslU are essential for unfolding of protein substrates subsequently hydrolyzed by HslV. HslU recognizes the N-terminal part of its protein substrates and unfolds these before they are guided to HslV for hydrolysis. The polypeptide is ATP-dependent protease ATPase subunit HslU (Bordetella pertussis (strain Tohama I / ATCC BAA-589 / NCTC 13251)).